We begin with the raw amino-acid sequence, 571 residues long: Streptolysin O (571 aa).

Residues 1-33 (MSNKKTFKKYSRVAGLLTVALIIGNLVTANAES) form the signal peptide. Disordered regions lie at residues 32 to 56 (ESNKQNTASTETTTTNEQPKPESSE) and 81 to 108 (KEMPLESAEKEEKKSEDKKKSEEDHTEE). Over residues 37–48 (NTASTETTTTNE) the composition is skewed to low complexity. 4 beta stranded membrane passes run 260–273 (KSQIEAALNVNSKI), 280–289 (IDFKSISKGE), 358–367 (SNDVEAAFSA), and 375–387 (KTNGKYSDILENS). Residues 529 to 539 (ECTGLAWEWWR) carry the Conserved undecapeptide motif. A short sequence motif (cholesterol binding) is located at residue Thr561.

This sequence belongs to the cholesterol-dependent cytolysin family. Homooligomeric pore complex of 35 to 50 subunits; when inserted in the host membrane.

Its subcellular location is the secreted. The protein localises to the host cell membrane. In terms of biological role, a cholesterol-dependent toxin that causes cytolysis by forming pores in cholesterol containing host membranes. After binding to target membranes, the protein undergoes a major conformation change, leading to its insertion in the host membrane and formation of an oligomeric pore complex. Cholesterol is required for binding to host membranes, membrane insertion and pore formation; cholesterol binding is mediated by a Thr-Leu pair in the C-terminus. Can be reversibly inactivated by oxidation. The sequence is that of Streptolysin O (slo) from Streptococcus pyogenes serotype M6 (strain ATCC BAA-946 / MGAS10394).